Here is a 273-residue protein sequence, read N- to C-terminus: Ribosomal RNA small subunit methyltransferase A (273 aa).

Positions 18, 20, 45, 66, 91, and 113 each coordinate S-adenosyl-L-methionine.

Belongs to the class I-like SAM-binding methyltransferase superfamily. rRNA adenine N(6)-methyltransferase family. RsmA subfamily.

It is found in the cytoplasm. It carries out the reaction adenosine(1518)/adenosine(1519) in 16S rRNA + 4 S-adenosyl-L-methionine = N(6)-dimethyladenosine(1518)/N(6)-dimethyladenosine(1519) in 16S rRNA + 4 S-adenosyl-L-homocysteine + 4 H(+). In terms of biological role, specifically dimethylates two adjacent adenosines (A1518 and A1519) in the loop of a conserved hairpin near the 3'-end of 16S rRNA in the 30S particle. May play a critical role in biogenesis of 30S subunits. This chain is Ribosomal RNA small subunit methyltransferase A, found in Salmonella newport (strain SL254).